Consider the following 309-residue polypeptide: Homoserine O-succinyltransferase (309 aa).

Cysteine 142 (acyl-thioester intermediate) is an active-site residue. Substrate is bound by residues lysine 163 and serine 192. The Proton acceptor role is filled by histidine 235. Residue glutamate 237 is part of the active site. A substrate-binding site is contributed by arginine 249.

This sequence belongs to the MetA family. Homodimer.

The protein localises to the cytoplasm. The enzyme catalyses L-homoserine + succinyl-CoA = O-succinyl-L-homoserine + CoA. It functions in the pathway amino-acid biosynthesis; L-methionine biosynthesis via de novo pathway; O-succinyl-L-homoserine from L-homoserine: step 1/1. Functionally, transfers a succinyl group from succinyl-CoA to L-homoserine, forming succinyl-L-homoserine. The polypeptide is Homoserine O-succinyltransferase (Escherichia coli O139:H28 (strain E24377A / ETEC)).